Consider the following 270-residue polypeptide: Formamidopyrimidine-DNA glycosylase (270 aa).

Pro-2 functions as the Schiff-base intermediate with DNA in the catalytic mechanism. Glu-3 acts as the Proton donor in catalysis. Catalysis depends on Lys-58, which acts as the Proton donor; for beta-elimination activity. Residues His-91, Arg-110, and Arg-151 each contribute to the DNA site. The FPG-type zinc-finger motif lies at 236-270; sequence LVYGRDGLPCPNCGRALKHATIGQRASVWCSHCQR. Arg-260 acts as the Proton donor; for delta-elimination activity in catalysis.

The protein belongs to the FPG family. In terms of assembly, monomer. Zn(2+) serves as cofactor.

It carries out the reaction Hydrolysis of DNA containing ring-opened 7-methylguanine residues, releasing 2,6-diamino-4-hydroxy-5-(N-methyl)formamidopyrimidine.. The enzyme catalyses 2'-deoxyribonucleotide-(2'-deoxyribose 5'-phosphate)-2'-deoxyribonucleotide-DNA = a 3'-end 2'-deoxyribonucleotide-(2,3-dehydro-2,3-deoxyribose 5'-phosphate)-DNA + a 5'-end 5'-phospho-2'-deoxyribonucleoside-DNA + H(+). In terms of biological role, involved in base excision repair of DNA damaged by oxidation or by mutagenic agents. Acts as a DNA glycosylase that recognizes and removes damaged bases. Has a preference for oxidized purines, such as 7,8-dihydro-8-oxoguanine (8-oxoG). Has AP (apurinic/apyrimidinic) lyase activity and introduces nicks in the DNA strand. Cleaves the DNA backbone by beta-delta elimination to generate a single-strand break at the site of the removed base with both 3'- and 5'-phosphates. This Stenotrophomonas maltophilia (strain R551-3) protein is Formamidopyrimidine-DNA glycosylase.